The primary structure comprises 119 residues: Large ribosomal subunit protein bL19c (119 aa).

Belongs to the bacterial ribosomal protein bL19 family.

It is found in the plastid. It localises to the chloroplast. The sequence is that of Large ribosomal subunit protein bL19c from Mesostigma viride (Green alga).